The primary structure comprises 379 residues: Chaperone protein DnaJ (379 aa).

The J domain maps to Cys-7–Gly-72. The CR-type zinc finger occupies Gly-135–Glu-213. Zn(2+) is bound by residues Cys-148, Cys-151, Cys-165, Cys-168, Cys-187, Cys-190, Cys-201, and Cys-204. CXXCXGXG motif repeat units lie at residues Cys-148–Gly-155, Cys-165–Gly-172, Cys-187–Gly-194, and Cys-201–Gly-208.

Belongs to the DnaJ family. As to quaternary structure, homodimer. Zn(2+) serves as cofactor.

The protein resides in the cytoplasm. Functionally, participates actively in the response to hyperosmotic and heat shock by preventing the aggregation of stress-denatured proteins and by disaggregating proteins, also in an autonomous, DnaK-independent fashion. Unfolded proteins bind initially to DnaJ; upon interaction with the DnaJ-bound protein, DnaK hydrolyzes its bound ATP, resulting in the formation of a stable complex. GrpE releases ADP from DnaK; ATP binding to DnaK triggers the release of the substrate protein, thus completing the reaction cycle. Several rounds of ATP-dependent interactions between DnaJ, DnaK and GrpE are required for fully efficient folding. Also involved, together with DnaK and GrpE, in the DNA replication of plasmids through activation of initiation proteins. The polypeptide is Chaperone protein DnaJ (Rhodopseudomonas palustris (strain BisB18)).